Consider the following 202-residue polypeptide: MGQDTITKQHSLIFLTGFSGSGKSTIGPLLANSLGYEFLDVDQAVEQRAGKPITRIFAEEGEAAFRELELQTLKTVAGEKEMVVSLGGGALQYDPSHAFIAGAGTLVYLKSSAANLAKRLVNKRDRPLLRGENGRKHSREELEEKIRRILEEREPRYQQAALTVQTDQKRIGSTVEELTRKIERLVRKAPQIGEDGQQPEQP.

Gly20–Thr25 contributes to the ATP binding site. Ser24 provides a ligand contact to Mg(2+). Substrate-binding residues include Asp42, Arg66, and Gly88. Arg126 contacts ATP. Arg153 is a substrate binding site.

This sequence belongs to the shikimate kinase family. As to quaternary structure, monomer. The cofactor is Mg(2+).

The protein resides in the cytoplasm. It catalyses the reaction shikimate + ATP = 3-phosphoshikimate + ADP + H(+). Its pathway is metabolic intermediate biosynthesis; chorismate biosynthesis; chorismate from D-erythrose 4-phosphate and phosphoenolpyruvate: step 5/7. Its function is as follows. Catalyzes the specific phosphorylation of the 3-hydroxyl group of shikimic acid using ATP as a cosubstrate. The polypeptide is Shikimate kinase (Chlorobium luteolum (strain DSM 273 / BCRC 81028 / 2530) (Pelodictyon luteolum)).